Reading from the N-terminus, the 211-residue chain is Ras-related protein RABB1c (211 aa).

An N-acetylserine modification is found at serine 2. GTP is bound at residue 13–21 (GDTGVGKSC). Residues 35-43 (HDLTIGVEF) carry the Effector region motif. GTP is bound by residues 61-65 (DTAGQ), 119-122 (NKCD), and 149-151 (SAK). Residues cysteine 209 and cysteine 210 are each lipidated (S-geranylgeranyl cysteine).

Belongs to the small GTPase superfamily. Rab family.

The protein resides in the cell membrane. In terms of biological role, intracellular vesicle trafficking and protein transport. The polypeptide is Ras-related protein RABB1c (RABB1C) (Arabidopsis thaliana (Mouse-ear cress)).